A 384-amino-acid chain; its full sequence is MAAYCSRVYHHHPVSPSTMQGSLARPSIHAGSASLTFRARPNSVSIVRCDADSPPEGSAVAGWAPPGPYTGRDPAARKPAWLRQRAAQGEKYARLRESLGELKLNTVCVEAQCPNIGECWNGGGGAGGDGDGIATATIMLLGDTCTRGCRFCAVKTSNKPPPPDALEPLRTAVAVASWGVDYVVLTSVDRDDLPDGGSGHFAQTVKALKELKPGILVECLTSDFRGDLEAVSSLASSGLDVFAHNIETVRSLQRIVRDPRAAYDQSLAVLKHAKNCKDGMVTKSSIMLGLGETDEEVKQTMCDLRAIDVDILTLGQYLQPTERHLRVREYVTPEKFDFWKEYGESLGFLYVASGPLVRSSYRAGELFVQNLVRRKKAELAPTLQ.

A chloroplast-targeting transit peptide spans 1-48 (MAAYCSRVYHHHPVSPSTMQGSLARPSIHAGSASLTFRARPNSVSIVR). Cys-108, Cys-113, Cys-119, Cys-145, Cys-149, Cys-152, and Ser-360 together coordinate [4Fe-4S] cluster. Residues 128-349 (GDGDGIATAT…KEYGESLGFL (222 aa)) form the Radical SAM core domain.

The protein belongs to the radical SAM superfamily. Lipoyl synthase family. [4Fe-4S] cluster serves as cofactor.

It is found in the plastid. It localises to the chloroplast. The catalysed reaction is [[Fe-S] cluster scaffold protein carrying a second [4Fe-4S](2+) cluster] + N(6)-octanoyl-L-lysyl-[protein] + 2 oxidized [2Fe-2S]-[ferredoxin] + 2 S-adenosyl-L-methionine + 4 H(+) = [[Fe-S] cluster scaffold protein] + N(6)-[(R)-dihydrolipoyl]-L-lysyl-[protein] + 4 Fe(3+) + 2 hydrogen sulfide + 2 5'-deoxyadenosine + 2 L-methionine + 2 reduced [2Fe-2S]-[ferredoxin]. It participates in protein modification; protein lipoylation via endogenous pathway; protein N(6)-(lipoyl)lysine from octanoyl-[acyl-carrier-protein]: step 2/2. Functionally, catalyzes the radical-mediated insertion of two sulfur atoms into the C-6 and C-8 positions of the octanoyl moiety bound to the lipoyl domains of lipoate-dependent enzymes, thereby converting the octanoylated domains into lipoylated derivatives. In Oryza sativa subsp. indica (Rice), this protein is Lipoyl synthase 2, chloroplastic.